The following is a 1579-amino-acid chain: Eukaryotic translation initiation factor 4 gamma 3 (1579 aa).

2 disordered regions span residues 1 to 35 (MNSQPQARSPFFQRPQIQPPRAAIPNSSPSIRPGV) and 128 to 326 (TQQQ…GPSL). The span at 10–25 (PFFQRPQIQPPRAAIP) shows a compositional bias: low complexity. The segment covering 26–35 (NSSPSIRPGV) has biased composition (polar residues). The tract at residues 134–162 (PAKREKKTIRIRDPNQGGKDITEEIMSGG) is PABPC1-binding. Residues 167 to 183 (PTPPIGRPASTPTPPQQ) are compositionally biased toward pro residues. Thr168 is subject to Phosphothreonine. Ser230, Ser232, and Ser267 each carry phosphoserine. Low complexity predominate over residues 266–292 (SSPTSLPPLARSSLPSPMSAALSSQPL). Positions 295-308 (AEDKCELPSSKEED) are enriched in basic and acidic residues. Over residues 315–326 (PTSCTAASGPSL) the composition is skewed to polar residues. Residues Ser436, Ser470, Ser472, and Ser490 each carry the phosphoserine modification. Residues 454-470 (RTCLSKDAKEMQDKAES) are compositionally biased toward basic and acidic residues. Disordered stretches follow at residues 454 to 615 (RTCL…DTEG), 681 to 706 (RQTPGGRGVPLLNVGPRRSQPGQRRE), and 724 to 744 (AENAWKPSQKRDSHADDPESI). The segment covering 471–480 (ESDGQAEETA) has biased composition (acidic residues). The segment covering 481-501 (DPQSLHSGRSPAPVQTATTAP) has biased composition (polar residues). Composition is skewed to basic and acidic residues over residues 506-515 (KTKEQTRTPD) and 549-563 (SERDPSALKRGKAEE). Low complexity predominate over residues 589–598 (SGSADSSADG). The span at 606 to 615 (ESWKPADTEG) shows a compositional bias: basic and acidic residues. The EIF4E-binding stretch occupies residues 614–625 (EGKKQYDREFLL). An eIF3/EIF4A-binding region spans residues 694-1014 (VGPRRSQPGQ…EQRKVQQLMT (321 aa)). 5 HEAT repeats span residues 740–778 (DPESIKTQELFRKVRSILNKLTPQMFNQLMKQVSALTVD), 779–826 (TEER…GNTV), 827–900 (NFRK…LKML), 901–939 (TEAIMHDCVVKLLKNHDEESLECLCRLLTTIGKDLDFEK), and 940–979 (AKPRMDQYFNQMEKIVKERKTSSRIRFMLQDVIDLRLCNW). Residues 750 to 978 (FRKVRSILNK…QDVIDLRLCN (229 aa)) enclose the MIF4G domain. Positions 855 to 871 (KELEAASAPEERTRLHD) are enriched in basic and acidic residues. Residues 855–875 (KELEAASAPEERTRLHDELEE) form a disordered region. Residues 989 to 1018 (KTIEQIHKEAKIEEQEEQRKVQQLMTKEKR) are a coiled coil. 2 disordered regions span residues 1009–1037 (VQQLMTKEKRRPGVQRVDEGGWNTVQGAK) and 1067–1214 (LGSW…LSEE). The span at 1086-1098 (LRSSASSLNRFSP) shows a compositional bias: low complexity. Ser1150 carries the post-translational modification Phosphoserine; by CaMK1. Composition is skewed to basic and acidic residues over residues 1150–1169 (SSKDLLDNQSQEEQRREMLE) and 1179–1197 (DAERASTEADRSKTRELAK). A coiled-coil region spans residues 1154 to 1176 (LLDNQSQEEQRREMLETVKQLTG). Ser1212 is subject to Phosphoserine. The 123-residue stretch at 1215–1337 (EVERKSKSII…SMRELIVEFS (123 aa)) folds into the MI domain. A coiled-coil region spans residues 1406 to 1438 (SSEALSKKELSAEELSQRLEKLIMEEKADDERI). In terms of domain architecture, W2 spans 1410 to 1579 (LSKKELSAEE…REAEEESEDN (170 aa)). An EIF4A-binding region spans residues 1427 to 1579 (LIMEEKADDE…REAEEESEDN (153 aa)). The interval 1565-1579 (FFTWLREAEEESEDN) is necessary but not sufficient for MKNK1-binding.

It belongs to the eukaryotic initiation factor 4G family. As to quaternary structure, interacts with EIF4A, EIF4E, eIF3 and PABPC1. Part of a complex with EIF4E. eIF4F is a multi-subunit complex, the composition of which varies with external and internal environmental conditions. It is composed of at least EIF4A, EIF4E and EIF4G1/EIF4G3. EIF4G1/EIF4G3 interacts through its C-terminus with the serine/threonine kinases MKNK1, and with MKNK2. Appears to act as a scaffold protein, holding these enzymes in place to phosphorylate eIF4E. Non-phosphorylated EIF4EBP1 competes with EIF4G1/EIFG3 to interact with EIF4E; insulin stimulated MAP-kinase (MAPK1 and MAPK3) phosphorylation of EIF4EBP1 causes dissociation of the complex allowing EIF4G1/EIF4G3 to bind and consequent initiation of translation. EIF4G1/EIF4G3 interacts with PABPC1 to bring about circularization of the mRNA. Interacts with FXR1; promoting translation of FXR1 target mRNAs.

Component of the protein complex eIF4F, which is involved in the recognition of the mRNA cap, ATP-dependent unwinding of 5'-terminal secondary structure and recruitment of mRNA to the ribosome. Functional homolog of EIF4G1. This is Eukaryotic translation initiation factor 4 gamma 3 (Eif4g3) from Mus musculus (Mouse).